The chain runs to 578 residues: Proline--tRNA ligase (578 aa).

This sequence belongs to the class-II aminoacyl-tRNA synthetase family. ProS type 1 subfamily. In terms of assembly, homodimer.

Its subcellular location is the cytoplasm. It catalyses the reaction tRNA(Pro) + L-proline + ATP = L-prolyl-tRNA(Pro) + AMP + diphosphate. Catalyzes the attachment of proline to tRNA(Pro) in a two-step reaction: proline is first activated by ATP to form Pro-AMP and then transferred to the acceptor end of tRNA(Pro). As ProRS can inadvertently accommodate and process non-cognate amino acids such as alanine and cysteine, to avoid such errors it has two additional distinct editing activities against alanine. One activity is designated as 'pretransfer' editing and involves the tRNA(Pro)-independent hydrolysis of activated Ala-AMP. The other activity is designated 'posttransfer' editing and involves deacylation of mischarged Ala-tRNA(Pro). The misacylated Cys-tRNA(Pro) is not edited by ProRS. The protein is Proline--tRNA ligase of Burkholderia thailandensis (strain ATCC 700388 / DSM 13276 / CCUG 48851 / CIP 106301 / E264).